A 348-amino-acid polypeptide reads, in one-letter code: N-acetyl-gamma-glutamyl-phosphate reductase (348 aa).

Cys151 is an active-site residue.

Belongs to the NAGSA dehydrogenase family. Type 1 subfamily.

It is found in the cytoplasm. It catalyses the reaction N-acetyl-L-glutamate 5-semialdehyde + phosphate + NADP(+) = N-acetyl-L-glutamyl 5-phosphate + NADPH + H(+). Its pathway is amino-acid biosynthesis; L-arginine biosynthesis; N(2)-acetyl-L-ornithine from L-glutamate: step 3/4. In terms of biological role, catalyzes the NADPH-dependent reduction of N-acetyl-5-glutamyl phosphate to yield N-acetyl-L-glutamate 5-semialdehyde. This chain is N-acetyl-gamma-glutamyl-phosphate reductase, found in Lachnospira eligens (strain ATCC 27750 / DSM 3376 / VPI C15-48 / C15-B4) (Eubacterium eligens).